We begin with the raw amino-acid sequence, 160 residues long: MAELSSLAELGAATGNTNTQAAAPVHVQKLDKSGRAYATGKRKNAIARVWVKPGSGKIVVNDKEFATYFARPVLQMILNQPIIASNRSGQYDIVATVVGGGLSGQAGAVRHGISKALTYYEPALRAVLKKGGFLTRDSRVVERKKYGKAKARRSFQFSKR.

The protein belongs to the universal ribosomal protein uS9 family.

The protein is Small ribosomal subunit protein uS9 of Mesorhizobium japonicum (strain LMG 29417 / CECT 9101 / MAFF 303099) (Mesorhizobium loti (strain MAFF 303099)).